We begin with the raw amino-acid sequence, 459 residues long: Phosphoglucosamine mutase (459 aa).

Ser102 serves as the catalytic Phosphoserine intermediate. Residues Ser102, Asp243, Asp245, and Asp247 each coordinate Mg(2+). Ser102 is subject to Phosphoserine.

It belongs to the phosphohexose mutase family. Requires Mg(2+) as cofactor. Post-translationally, activated by phosphorylation.

The enzyme catalyses alpha-D-glucosamine 1-phosphate = D-glucosamine 6-phosphate. Catalyzes the conversion of glucosamine-6-phosphate to glucosamine-1-phosphate. The sequence is that of Phosphoglucosamine mutase from Bartonella henselae (strain ATCC 49882 / DSM 28221 / CCUG 30454 / Houston 1) (Rochalimaea henselae).